A 225-amino-acid polypeptide reads, in one-letter code: Transcriptional activator protein BglJ (225 aa).

An HTH luxR-type domain is found at Y146–L211. Residues M170–F189 constitute a DNA-binding region (H-T-H motif).

In terms of assembly, forms a complex with RcsB; genetically both BglJ and RcsB are required to relieve bgl operon repression by H-NS and by StpA.

A crytic transcriptional activator. When its expression is induced it relieves H-NS repression of the bgl operon. Acts independently of transcription factor LeuO. The sequence is that of Transcriptional activator protein BglJ (bglJ) from Escherichia coli (strain K12).